Here is a 292-residue protein sequence, read N- to C-terminus: MTTARYRPTWDLALEPLVSCKLCLGEYTVEQMTTIAQCQCIFCTLCLKQYVELLIKEGLETAISCPDASCPKRGHLQENEIECMVAAEIMQKYKKLQFEKEILLDPCRTWCPSSSCQAVCKLQEKGIQNPQLVQCSACDIEFCSACKANWHPGQGCPENMAITFLPGDSSSFFKSLEDDVPIKRCPKCKVYIERDEGCAQMMCKNCKHAFCWYCLESLDDDFLLIHYDKGPCRNKLGHSRASVIWHRTQVVGIFAGFGLLLLVASPFLLLATPFVLCCKCKCCKGDDDPLPT.

Residues 16 to 236 (PLVSCKLCLG…YDKGPCRNKL (221 aa)) are TRIAD supradomain. 14 residues coordinate Zn(2+): Cys-20, Cys-23, Cys-43, Cys-46, Cys-111, Cys-116, Cys-135, Cys-138, Cys-143, Cys-146, His-151, Cys-156, Cys-185, and Cys-188. The RING-type 1 zinc-finger motif lies at 20–70 (CKLCLGEYTVEQMTTIAQCQCIFCTLCLKQYVELLIKEGLETAISCPDASC). The IBR-type zinc-finger motif lies at 91–156 (QKYKKLQFEK…KANWHPGQGC (66 aa)). The RING-type 2; atypical zinc-finger motif lies at 185–214 (CPKCKVYIERDEGCAQMMCKNCKHAFCWYC). Residue Cys-198 is part of the active site. Zn(2+) contacts are provided by Cys-203, Cys-206, Cys-211, Cys-214, His-226, and Cys-232. The helical transmembrane segment at 250–270 (VVGIFAGFGLLLLVASPFLLL) threads the bilayer.

The protein belongs to the RBR family. RNF144 subfamily.

Its subcellular location is the membrane. It catalyses the reaction [E2 ubiquitin-conjugating enzyme]-S-ubiquitinyl-L-cysteine + [acceptor protein]-L-lysine = [E2 ubiquitin-conjugating enzyme]-L-cysteine + [acceptor protein]-N(6)-ubiquitinyl-L-lysine.. It functions in the pathway protein modification; protein ubiquitination. Its function is as follows. E3 ubiquitin-protein ligase which accepts ubiquitin from E2 ubiquitin-conjugating enzymes ube2l3 and ube2l6 in the form of a thioester and then directly transfers the ubiquitin to targeted substrates. This chain is Probable E3 ubiquitin-protein ligase RNF144A (rnf144a), found in Xenopus tropicalis (Western clawed frog).